Reading from the N-terminus, the 547-residue chain is CTP synthase (547 aa).

Residues 1 to 267 (MKTKFIFITG…DQKIAIMLRL (267 aa)) form an amidoligase domain region. A CTP-binding site is contributed by Ser-14. Residue Ser-14 coordinates UTP. ATP-binding positions include 15-20 (SLGKGL) and Asp-72. The Mg(2+) site is built by Asp-72 and Glu-141. CTP is bound by residues 148–150 (DIE), 188–193 (KTKPTQ), and Lys-224. UTP-binding positions include 188-193 (KTKPTQ) and Lys-224. Residues 292–545 (TIGIVGKYVD…IRAAKTHPAG (254 aa)) enclose the Glutamine amidotransferase type-1 domain. Gly-354 is an L-glutamine binding site. Cys-381 acts as the Nucleophile; for glutamine hydrolysis in catalysis. Residues 382-385 (LGMQ), Glu-405, and Arg-473 contribute to the L-glutamine site. Residues His-518 and Glu-520 contribute to the active site.

This sequence belongs to the CTP synthase family. As to quaternary structure, homotetramer.

The catalysed reaction is UTP + L-glutamine + ATP + H2O = CTP + L-glutamate + ADP + phosphate + 2 H(+). It carries out the reaction L-glutamine + H2O = L-glutamate + NH4(+). It catalyses the reaction UTP + NH4(+) + ATP = CTP + ADP + phosphate + 2 H(+). It participates in pyrimidine metabolism; CTP biosynthesis via de novo pathway; CTP from UDP: step 2/2. Its activity is regulated as follows. Allosterically activated by GTP, when glutamine is the substrate; GTP has no effect on the reaction when ammonia is the substrate. The allosteric effector GTP functions by stabilizing the protein conformation that binds the tetrahedral intermediate(s) formed during glutamine hydrolysis. Inhibited by the product CTP, via allosteric rather than competitive inhibition. Catalyzes the ATP-dependent amination of UTP to CTP with either L-glutamine or ammonia as the source of nitrogen. Regulates intracellular CTP levels through interactions with the four ribonucleotide triphosphates. The chain is CTP synthase from Nitratidesulfovibrio vulgaris (strain DP4) (Desulfovibrio vulgaris).